The primary structure comprises 301 residues: Phosphatidylcholine:diacylglycerol cholinephosphotransferase 1 (301 aa).

The disordered stretch occupies residues 1-39 (MSAAAAETDVSLRRRSNSLNGNHTNGVAIDGTLDNNNRR). The next 5 helical transmembrane spans lie at 88-108 (HWIP…EYTL), 141-161 (VLAA…VWTW), 171-191 (IAAL…QLPL), 202-222 (FPVG…GSMI), and 255-275 (GHYT…DSLA). Active-site residues include His-216, His-256, and Asp-260.

The protein belongs to the phosphatidylcholine:diacylglycerol cholinephosphotransferase family.

Its subcellular location is the membrane. The catalysed reaction is 1,2-ditetradecanoyl-sn-glycero-3-phosphocholine + 1,2-di-(9Z-octadecenoyl)-sn-glycerol = 1,2-ditetradecanoyl-sn-glycerol + 1,2-di-(9Z-octadecenoyl)-sn-glycero-3-phosphocholine. In terms of biological role, functions as a phosphatidylcholine:diacylglycerol cholinephosphotransferase that catalyzes the transfer of the phosphocholine headgroup from phosphatidylcholine (PC) to diacylglycerol, a major reaction for the transfer of 18:1 into phosphatidylcholine for desaturation and also for the reverse transfer of 18:2 and 18:3 into the triacylglycerols synthesis pathway. In Arabidopsis thaliana (Mouse-ear cress), this protein is Phosphatidylcholine:diacylglycerol cholinephosphotransferase 1.